The following is a 545-amino-acid chain: POTE ankyrin domain family member H (545 aa).

ANK repeat units lie at residues 180–208, 209–238, 242–271, 275–304, 308–337, 341–370, and 374–404; these read LHRA…KKDK, QKRT…QLNI, KKRT…DPNI, YGNT…DIES, HGLT…NLNA, YGRT…DVSS, and SGQT…QILK. A disordered region spans residues 406 to 524; that stretch reads SSENSNPEQD…KQLSEEQNTG (119 aa). 2 stretches are compositionally biased toward basic and acidic residues: residues 414-429 and 443-458; these read QDLK…RLKG and EINK…EMKK. A compositionally biased stretch (polar residues) spans 513–524; that stretch reads TQKQLSEEQNTG.

It belongs to the POTE family.

In Homo sapiens (Human), this protein is POTE ankyrin domain family member H (POTEH).